Here is a 1367-residue protein sequence, read N- to C-terminus: Collagen alpha-1(XV) chain (1367 aa).

A signal peptide spans 1–31 (MTHRRTAQGRRPRWLLSIISALLSAVLQTRA). One can recognise a Laminin G-like domain in the interval 54–249 (SVSFTTGYGG…SSASGEASGF (196 aa)). Positions 229–604 (RTPEELCEAQ…DIVGNEDLLR (376 aa)) are nonhelical region 1 (NC1). Serine 243 and serine 247 each carry an O-linked (Xyl...) (chondroitin sulfate) serine glycan. The disordered stretch occupies residues 267–319 (APPKESHVDPISVPPTSSSPAEDSELSGEPVPEGTPETNLSIIGHSSPEQGSG). 2 N-linked (GlcNAc...) asparagine glycosylation sites follow: asparagine 305 and asparagine 323. Serine 341 carries O-linked (Xyl...) (chondroitin sulfate) serine glycosylation. N-linked (GlcNAc...) asparagine glycans are attached at residues asparagine 348, asparagine 375, and asparagine 402. 2 disordered regions span residues 396–446 (DTPD…SHGE) and 529–784 (TAEP…GHVE). Residues 402–429 (NLTTTASGDGEVPTSTDGDTEADSSPTG) are compositionally biased toward polar residues. Residues 434–446 (KPREEATLGSHGE) show a composition bias toward basic and acidic residues. The segment covering 555 to 564 (PSGPPLPTPT) has biased composition (pro residues). The span at 582–595 (GPVGGLDEGSGSGD) shows a compositional bias: gly residues. Collagen-like domains are found at residues 605–665 (GPPG…GMKG) and 666–717 (EKGA…PPGP). The tract at residues 605 to 718 (GPPGPPGPPG…PGPPGPPGPG (114 aa)) is triple-helical region 1 (COL1). Residues 606–616 (PPGPPGPPGSP) show a composition bias toward pro residues. A glycan (N-linked (GlcNAc...) asparagine) is linked at asparagine 673. A compositionally biased stretch (pro residues) spans 703–717 (MGPPGPPGPPGPPGP). Residues 719–748 (CTTELGFEIEGSGDVRLLSKPTISGPTSPS) are nonhelical region 2 (NC2). O-linked (Xyl...) (chondroitin sulfate) serine glycosylation occurs at serine 730. A compositionally biased stretch (low complexity) spans 737–750 (SKPTISGPTSPSGP). A triple-helical region 2 (COL2) region spans residues 749-783 (GPKGEKGEQGAKGERGADGTSTMGPPGPRGPPGHV). A compositionally biased stretch (basic and acidic residues) spans 751-765 (KGEKGEQGAKGERGA). The interval 784 to 807 (EVLSSSLINITNGSMNFSDIPELM) is nonhelical region 3 (NC3). Residues asparagine 792, asparagine 795, and asparagine 799 are each glycosylated (N-linked (GlcNAc...) asparagine). 2 Collagen-like domains span residues 808–850 (GPPG…GEPG) and 863–912 (KGRK…GDRG). Residues 808–852 (GPPGPDGVPGLPGFPGPRGPKGDTGVPGFPGLKGEQGEKGEPGAI) are triple-helical region 3 (COL3). The nonhelical region 4 (NC4) stretch occupies residues 853–863 (LTGDVPLEMMK). The tract at residues 864–934 (GRKGEPGIHG…PGPPGPPGAV (71 aa)) is triple-helical region 4 (COL4). A disordered region spans residues 905-930 (KGAKGDRGVTLPGPPGLPGPPGPPGP). The span at 916–930 (PGPPGLPGPPGPPGP) shows a compositional bias: pro residues. The nonhelical region 5 (NC5) stretch occupies residues 935-968 (VNIKGAVFPIPARPHCKTPVGTAHPGDPELVTFH). Residues 969 to 998 (GVKGEKGSWGLPGSKGEKGDQGAQGPPGPP) are triple-helical region 5 (COL5). Disordered regions lie at residues 974-1000 (KGSWGLPGSKGEKGDQGAQGPPGPPVD) and 1055-1089 (GPPGIPGLPGPPGFGRPGVPGPPGPPGPPGPPAIL). A nonhelical region 6 (NC6) region spans residues 999 to 1031 (VDPAYLRHFLNSLKGENEDASFRGESSNNLFVS). The tract at residues 1032-1086 (GPPGLPGYPGLVGQKGEAVVGPQGPPGIPGLPGPPGFGRPGVPGPPGPPGPPGPP) is triple-helical region 6 (COL6). Residues 1055 to 1086 (GPPGIPGLPGPPGFGRPGVPGPPGPPGPPGPP) show a composition bias toward pro residues. The interval 1087–1096 (AILGAAVALP) is nonhelical region 7 (NC7). The segment at 1097 to 1111 (GPPGPPGQPGLPGSR) is triple-helical region 7 (COL7). Positions 1112–1367 (NLVTALSDMG…ENSFMTDTRK (256 aa)) are nonhelical region 8 (NC8). Disulfide bonds link cysteine 1216-cysteine 1356 and cysteine 1318-cysteine 1348.

It belongs to the multiplexin collagen family. Trimer; disulfide-linked. As to quaternary structure, interacts moderately with EFEMP2. In terms of processing, prolines at the third position of the tripeptide repeating unit (G-X-Y) are hydroxylated in some or all of the chains. O-glycosylated; contains chondroitin sulfate. As to expression, detected in testis, brain, heart, kidney, skeletal muscle and skin (at protein level). Detected in heart and skeletal muscle.

It is found in the secreted. The protein localises to the extracellular space. The protein resides in the extracellular matrix. Its function is as follows. Structural protein that stabilizes microvessels and muscle cells, both in heart and in skeletal muscle. In terms of biological role, restin potently inhibits angiogenesis. The polypeptide is Collagen alpha-1(XV) chain (Col15a1) (Mus musculus (Mouse)).